The sequence spans 348 residues: MGQCYYNETIGFFYNNSGKELSLHWRPKDVVVVALGLTVSVLVLLTNLLVIAAIASNRRFHQPIYYLLGNLAAADLFAGMAYLFLMFHTGPRTARLSIKGWFLRQGLLDTSLTASVATLLAIAVERHRSVMAVQLHSRLPRGRVVTLIVGVWAAALGLGLLPAHFWHCLCDLDSCSRMVPLFSRSYLAAWALSSLLVFLLMVAVYTRIFFYVRRRVERMAEHVSCHPRYRETTLSLVKTVVIILGAFVVCWTPGQVVLLLDGLDCKSCNVLAVEKYFLLLAEANSLVNAVVYSCRDAEMRRTFRRLLCCMCLRWSSHKSARYSASAQTGASTRIMLPENGRPLMDSTL.

The Extracellular segment spans residues 1-30 (MGQCYYNETIGFFYNNSGKELSLHWRPKDV). 2 N-linked (GlcNAc...) asparagine glycosylation sites follow: Asn-7 and Asn-15. The helical transmembrane segment at 31 to 51 (VVVALGLTVSVLVLLTNLLVI) threads the bilayer. Residues 52-66 (AAIASNRRFHQPIYY) are Cytoplasmic-facing. Residues 67–87 (LLGNLAAADLFAGMAYLFLMF) traverse the membrane as a helical segment. Residues 88-104 (HTGPRTARLSIKGWFLR) lie on the Extracellular side of the membrane. Residues 105-124 (QGLLDTSLTASVATLLAIAV) form a helical membrane-spanning segment. The Cytoplasmic segment spans residues 125–144 (ERHRSVMAVQLHSRLPRGRV). Residues 145 to 165 (VTLIVGVWAAALGLGLLPAHF) traverse the membrane as a helical segment. Over 166 to 185 (WHCLCDLDSCSRMVPLFSRS) the chain is Extracellular. A helical membrane pass occupies residues 186–206 (YLAAWALSSLLVFLLMVAVYT). At 207–239 (RIFFYVRRRVERMAEHVSCHPRYRETTLSLVKT) the chain is on the cytoplasmic side. The chain crosses the membrane as a helical span at residues 240-260 (VVIILGAFVVCWTPGQVVLLL). At 261 to 270 (DGLDCKSCNV) the chain is on the extracellular side. The helical transmembrane segment at 271–291 (LAVEKYFLLLAEANSLVNAVV) threads the bilayer. The Cytoplasmic segment spans residues 292-348 (YSCRDAEMRRTFRRLLCCMCLRWSSHKSARYSASAQTGASTRIMLPENGRPLMDSTL). Cys-308 carries S-palmitoyl cysteine lipidation. A PDZ-binding motif is present at residues 345-348 (DSTL).

This sequence belongs to the G-protein coupled receptor 1 family. As to quaternary structure, interacts with SLC9A3R2/NHERF2, MAGI3 and PLCB3. Interacts with RALA and GRK2. Most abundantly expressed in testes, kidney, and embryonic brain. Other organs also express the transcript, including heart, lung, spleen, thymus, stomach, and adult brain. Several have little or no expression, including liver, small intestine, and skeletal muscle.

The protein resides in the cell surface. It is found in the cell membrane. Functionally, receptor for lysophosphatidic acid (LPA), a mediator of diverse cellular activities. Seems to be coupled to the G(i)/G(o), G(12)/G(13), and G(q) families of heteromeric G proteins. Plays a key role in phospholipase C-beta (PLC-beta) signaling pathway Stimulates phospholipase C (PLC) activity in a manner that is independent of RALA activation. The chain is Lysophosphatidic acid receptor 2 from Mus musculus (Mouse).